Here is a 404-residue protein sequence, read N- to C-terminus: Serine/threonine transporter SstT (404 aa).

Helical transmembrane passes span 17–37, 39–59, 75–95, 138–158, 179–199, 212–232, 287–307, 319–339, and 354–374; these read IGIG…VTAI, ILGQ…VFAL, MTLI…VAVI, ALAT…GLAL, IVVW…FSTV, LLIL…NPLL, IPLG…VLTL, FLTA…ASGV, and FGIS…VGVI.

It belongs to the dicarboxylate/amino acid:cation symporter (DAACS) (TC 2.A.23) family.

The protein resides in the cell membrane. It catalyses the reaction L-serine(in) + Na(+)(in) = L-serine(out) + Na(+)(out). The enzyme catalyses L-threonine(in) + Na(+)(in) = L-threonine(out) + Na(+)(out). Involved in the import of serine and threonine into the cell, with the concomitant import of sodium (symport system). This Streptococcus equi subsp. equi (strain 4047) protein is Serine/threonine transporter SstT.